A 245-amino-acid polypeptide reads, in one-letter code: tRNA1(Val) (adenine(37)-N6)-methyltransferase (245 aa).

This sequence belongs to the methyltransferase superfamily. tRNA (adenine-N(6)-)-methyltransferase family.

Its subcellular location is the cytoplasm. It carries out the reaction adenosine(37) in tRNA1(Val) + S-adenosyl-L-methionine = N(6)-methyladenosine(37) in tRNA1(Val) + S-adenosyl-L-homocysteine + H(+). Its function is as follows. Specifically methylates the adenine in position 37 of tRNA(1)(Val) (anticodon cmo5UAC). This chain is tRNA1(Val) (adenine(37)-N6)-methyltransferase, found in Shigella sonnei (strain Ss046).